Reading from the N-terminus, the 178-residue chain is Adenine phosphoribosyltransferase (178 aa).

Belongs to the purine/pyrimidine phosphoribosyltransferase family. Homodimer.

The protein localises to the cytoplasm. The catalysed reaction is AMP + diphosphate = 5-phospho-alpha-D-ribose 1-diphosphate + adenine. The protein operates within purine metabolism; AMP biosynthesis via salvage pathway; AMP from adenine: step 1/1. Its function is as follows. Catalyzes a salvage reaction resulting in the formation of AMP, that is energically less costly than de novo synthesis. The sequence is that of Adenine phosphoribosyltransferase from Cereibacter sphaeroides (strain ATCC 17023 / DSM 158 / JCM 6121 / CCUG 31486 / LMG 2827 / NBRC 12203 / NCIMB 8253 / ATH 2.4.1.) (Rhodobacter sphaeroides).